A 66-amino-acid polypeptide reads, in one-letter code: Metallothionein-like protein type 3 (66 aa).

Belongs to the metallothionein superfamily. Type 15 family.

In terms of biological role, metallothioneins have a high content of cysteine residues that bind various heavy metals. In Malus domestica (Apple), this protein is Metallothionein-like protein type 3 (MT2).